A 748-amino-acid chain; its full sequence is Disintegrin and metalloproteinase domain-containing protein 10 (748 aa).

An N-terminal signal peptide occupies residues 1–19 (MVLLRVLILLLSWVAGLGG). Positions 20-213 (QYGNPLNKYI…NGPELLRKKR (194 aa)) are excised as a propeptide. Over 20–672 (QYGNPLNKYI…SPELYENIAE (653 aa)) the chain is Extracellular. The Cysteine switch motif lies at 171 to 178 (GGCADHSV). Zn(2+) is bound at residue C173. The Peptidase M12B domain occupies 220 to 456 (NTCQLYIQTD…KRNNCFVESG (237 aa)). N-linked (GlcNAc...) asparagine glycans are attached at residues N267 and N278. 16 disulfide bridges follow: C344–C451, C399–C435, C460–C495, C471–C484, C473–C479, C483–C515, C503–C511, C510–C536, C524–C543, C530–C562, C555–C567, C572–C598, C580–C607, C582–C597, C594–C639, and C632–C645. H383 is a Zn(2+) binding site. E384 is an active-site residue. Zn(2+) is bound by residues H387 and H393. N-linked (GlcNAc...) asparagine glycosylation is present at N439. Residues 457 to 551 (QPICGNGMVE…LCPASDPKPN (95 aa)) enclose the Disintegrin domain. Residue N551 is glycosylated (N-linked (GlcNAc...) asparagine). The chain crosses the membrane as a helical span at residues 673–696 (WIVAYWWAVLLMGIALIMLMAGFI). Topologically, residues 697-748 (KICSVHTPSSNPKLPPPKPLPGTLKRRRPPQPIQQPQRQRPRESYQMGHMRR) are cytoplasmic. The disordered stretch occupies residues 704–748 (PSSNPKLPPPKPLPGTLKRRRPPQPIQQPQRQRPRESYQMGHMRR). The SH3-binding signature appears at 708-715 (PKLPPPKP). Residue T719 is modified to Phosphothreonine. The SH3-binding signature appears at 722–728 (RRRPPQP). The segment at 734–748 (RQRPRESYQMGHMRR) is interaction with AP2A1, AP2A2 and AP2M1.

Forms a ternary EFNA5-EPHA3-ADAM10 complex mediating EFNA5 extracellular domain shedding by ADAM10 which regulates the EFNA5-EPHA3 complex internalization and function, the cleavage occurs in trans, with ADAM10 and its substrate being on the membranes of opposing cells. Interacts with the clathrin adapter AP2 complex subunits AP2A1, AP2A2, AP2B1, and AP2M1; this interaction facilitates ADAM10 endocytosis from the plasma membrane during long-term potentiation in hippocampal neurons. Forms a ternary complex composed of ADAM10, EPHA4 and CADH1; within the complex, ADAM10 cleaves CADH1 which disrupts adherens junctions. Interacts with EPHA2. Interacts with NGF in a divalent cation-dependent manner. Interacts with TSPAN14; the interaction promotes ADAM10 maturation and cell surface expression. Interacts with TSPAN5, TSPAN10, TSPAN14, TSPAN15, TSPAN17 and TSPAN33; these interactions regulate ADAM10 substrate specificity, endocytosis and turnover. Interacts (via extracellular domain) with TSPAN33 (via extracellular domain) and (via cytoplasmic domain) with AFDN; interaction with TSPAN33 allows the docking of ADAM10 to zonula adherens through a PDZ11-dependent interaction between TSPAN33 and PLEKHA7 while interaction with AFDN locks ADAM10 at zonula adherens. Interacts with DLG1; this interaction recruits ADAM10 to the cell membrane during long-term depression in hippocampal neurons. Interacts (via extracellular domain) with BACE1 (via extracellular domain). Interacts with FAM171A1. The cofactor is Zn(2+). Post-translationally, the precursor is cleaved by furin and PCSK7. Expressed at low level in kidney, spleen, lung, adrenal, heart and peripheral nerve.

The protein resides in the golgi apparatus membrane. It is found in the cell membrane. It localises to the cytoplasmic vesicle. Its subcellular location is the clathrin-coated vesicle. The protein localises to the cell projection. The protein resides in the axon. It is found in the dendrite. It localises to the cell junction. Its subcellular location is the adherens junction. The protein localises to the cytoplasm. The enzyme catalyses Endopeptidase of broad specificity.. With respect to regulation, catalytically inactive when the propeptide is intact and associated with the mature enzyme. The disintegrin and cysteine-rich regions modulate access of substrates to exerts an inhibitory effect on the cleavage of ADAM10 substrates. Transmembrane metalloprotease which mediates the ectodomain shedding of a myriad of transmembrane proteins, including adhesion proteins, growth factor precursors and cytokines being essential for development and tissue homeostasis. Associates with six members of the tetraspanin superfamily TspanC8 which regulate its exit from the endoplasmic reticulum and its substrate selectivity. Cleaves the membrane-bound precursor of TNF-alpha at '76-Ala-|-Val-77' to its mature soluble form. Responsible for the proteolytical release of soluble JAM3 from endothelial cells surface. Responsible for the proteolytic release of several other cell-surface proteins, including heparin-binding epidermal growth-like factor, ephrin-A2, CD44, CDH2 and for constitutive and regulated alpha-secretase cleavage of amyloid precursor protein (APP). Contributes to the normal cleavage of the cellular prion protein. Involved in the cleavage of the adhesion molecule L1 at the cell surface and in released membrane vesicles, suggesting a vesicle-based protease activity. Also controls the proteolytic processing of Notch and mediates lateral inhibition during neurogenesis. Required for the development of type 1 transitional B cells into marginal zone B cells, probably by cleaving Notch. Responsible for the FasL ectodomain shedding and for the generation of the remnant ADAM10-processed FasL (FasL APL) transmembrane form. Also cleaves the ectodomain of the integral membrane proteins CORIN and ITM2B. Mediates the proteolytic cleavage of LAG3, leading to release the secreted form of LAG3. Mediates the proteolytic cleavage of IL6R and IL11RA, leading to the release of secreted forms of IL6R and IL11RA. Enhances the cleavage of CHL1 by BACE1. Cleaves NRCAM. Cleaves TREM2, resulting in shedding of the TREM2 ectodomain. Involved in the development and maturation of glomerular and coronary vasculature. During development of the cochlear organ of Corti, promotes pillar cell separation by forming a ternary complex with CADH1 and EPHA4 and cleaving CADH1 at adherens junctions. May regulate the EFNA5-EPHA3 signaling. Regulates leukocyte transmigration as a sheddase for the adherens junction protein VE-cadherin/CDH5 in endothelial cells. This Bos taurus (Bovine) protein is Disintegrin and metalloproteinase domain-containing protein 10 (ADAM10).